A 446-amino-acid chain; its full sequence is Tubulin gamma chain (446 aa).

142 to 148 (AGGTGSG) serves as a coordination point for GTP.

The protein belongs to the tubulin family.

The protein localises to the cytoplasm. It localises to the cytoskeleton. Its subcellular location is the microtubule organizing center. The protein resides in the spindle pole body. Its function is as follows. Tubulin is the major constituent of microtubules. The gamma chain is found at microtubule organizing centers (MTOC) such as the spindle poles or the centrosome, suggesting that it is involved in the minus-end nucleation of microtubule assembly. This Schizosaccharomyces japonicus (Fission yeast) protein is Tubulin gamma chain (tug1).